A 1672-amino-acid polypeptide reads, in one-letter code: Probable outer membrane protein PmpB (1672 aa).

Residues 1–14 (MSSMKWLSATAVFA) form the signal peptide. 4 disordered regions span residues 69–122 (IPVK…GGAF), 203–263 (NTAE…GSGG), 384–415 (EAQTNKSSVTAASQSGPNTTPTPTPPVTAKGG), and 734–765 (STGVATTATTSQSPTVSSFLPRATAGSSPAPA). Low complexity-rich tracts occupy residues 77–88 (DDSSTSTPTTSS), 100–111 (SSSSSPNSGDTS), and 203–234 (NTAEVVPEETTPNPNPGTQTTTSQPSPTSKVQ). Composition is skewed to polar residues over residues 235 to 256 (SLFTYSSSTQANGNGADSQTPS) and 384 to 399 (EAQTNKSSVTAASQSG). Low complexity predominate over residues 734–744 (STGVATTATTS). Residues 1379–1672 (DDAAYNNFWV…MTSCGARMIF (294 aa)) form the Autotransporter domain.

The protein belongs to the PMP outer membrane protein family.

It is found in the secreted. The protein resides in the cell wall. Its subcellular location is the cell outer membrane. In Chlamydia muridarum (strain MoPn / Nigg), this protein is Probable outer membrane protein PmpB (pmpB).